We begin with the raw amino-acid sequence, 192 residues long: Group XIIA secretory phospholipase A2 (192 aa).

Positions 1 to 25 (MVTPRPAPARSPALLLLLLLATARG) are cleaved as a signal peptide. Residues G91, P93, and F95 each coordinate Ca(2+). Residue H113 is part of the active site. Residue D114 participates in Ca(2+) binding. D128 is a catalytic residue.

It belongs to the phospholipase A2 family. Ca(2+) serves as cofactor.

It localises to the secreted. The protein resides in the cytoplasm. It catalyses the reaction a 1,2-diacyl-sn-glycero-3-phosphocholine + H2O = a 1-acyl-sn-glycero-3-phosphocholine + a fatty acid + H(+). Functionally, PA2 catalyzes the calcium-dependent hydrolysis of the 2-acyl groups in 3-sn-phosphoglycerides. Does not exhibit detectable activity toward sn-2-arachidonoyl- or linoleoyl-phosphatidylcholine or -phosphatidylethanolamine. The polypeptide is Group XIIA secretory phospholipase A2 (Pla2g12a) (Mus musculus (Mouse)).